Here is a 651-residue protein sequence, read N- to C-terminus: Histone-lysine N-methyltransferase family member SUVH2 (651 aa).

Residues 1–28 form a disordered region; it reads MSTLLPFPDLNLMPDSQSSTAGTTAGDT. Low complexity predominate over residues 15-28; sequence DSQSSTAGTTAGDT. The YDG domain maps to 202 to 358; the sequence is DKHIVGPVTG…KFRLVRIEGQ (157 aa). The Pre-SET domain maps to 434–492; sequence TGCECKLSCTDDCLCARKNGGEFAYDDNGHLLKGKHVVFECGEFCTCGPSCKSRVTQKG. Zn(2+)-binding residues include Cys436, Cys438, Cys442, Cys446, Cys448, Cys474, Cys478, Cys480, and Cys484. Residues 495–638 form the SET domain; it reads NRLEVFRSKE…PLAELSLDYG (144 aa).

The protein belongs to the class V-like SAM-binding methyltransferase superfamily. Histone-lysine methyltransferase family. Suvar3-9 subfamily. In terms of assembly, self-interacts. Interacts with DNA-directed RNA polymerase V subunit NRPE1 and with DRD1 and DMS3. Binds to MORC1/CRT1. As to expression, expressed at low levels in leaves stems and flowers.

It localises to the nucleus. The protein localises to the chromosome. It is found in the centromere. Its function is as follows. Histone methyltransferase family member that plays a central role in gene silencing. Together with MORC6 and SUVH9, regulates the silencing of some transposable elements (TEs). According to PubMed:15775980, it is required for normal methylation of 'Lys-9' and 'Lys-27' of histone H3, 'Lys-20' of H4, and cytosine, but PubMed:19043555 see no significant effect on histone methylation when the gene is mutated. According to PubMed:19043555, the protein does not bind S-adenosyl-L-methionine and lacks methyltransferase activity. Instead, it may function downstream of DRM2 in RNA-directed DNA methylation, binding to methylated DNA and recruiting DNA-directed RNA polymerase V to chromatin. This chain is Histone-lysine N-methyltransferase family member SUVH2 (SUVH2), found in Arabidopsis thaliana (Mouse-ear cress).